Here is a 187-residue protein sequence, read N- to C-terminus: Putative manganese efflux pump MntP (187 aa).

A run of 6 helical transmembrane segments spans residues 3 to 23, 35 to 55, 56 to 76, 107 to 127, 129 to 149, and 166 to 186; these read FYSL…VSLC, HYLI…TIGY, FIGI…AFIL, LALA…FAFL, VNLL…CIIA, and LLGG…HLFF.

This sequence belongs to the MntP (TC 9.B.29) family.

The protein localises to the cell inner membrane. Probably functions as a manganese efflux pump. This is Putative manganese efflux pump MntP from Campylobacter jejuni (strain RM1221).